Reading from the N-terminus, the 424-residue chain is Phosphoribosylamine--glycine ligase (424 aa).

The ATP-grasp domain occupies 107–313; the sequence is KTFMKKYGIP…FLETLLNFYE (207 aa). 133–194 provides a ligand contact to ATP; the sequence is VEKVGAPIVV…EEFLEGEEAS (62 aa). 2 residues coordinate Mg(2+): Glu-283 and Asn-285.

The protein belongs to the GARS family. Requires Mg(2+) as cofactor. The cofactor is Mn(2+).

The enzyme catalyses 5-phospho-beta-D-ribosylamine + glycine + ATP = N(1)-(5-phospho-beta-D-ribosyl)glycinamide + ADP + phosphate + H(+). The protein operates within purine metabolism; IMP biosynthesis via de novo pathway; N(1)-(5-phospho-D-ribosyl)glycinamide from 5-phospho-alpha-D-ribose 1-diphosphate: step 2/2. The protein is Phosphoribosylamine--glycine ligase of Aquifex aeolicus (strain VF5).